We begin with the raw amino-acid sequence, 274 residues long: Aliphatic sulfonates import ATP-binding protein SsuB 2 (274 aa).

Residues 21–235 (VQLRNVVRQF…DSGQAGFQLI (215 aa)) enclose the ABC transporter domain. 53–60 (GASGSGKT) serves as a coordination point for ATP.

Belongs to the ABC transporter superfamily. Aliphatic sulfonates importer (TC 3.A.1.17.2) family. As to quaternary structure, the complex is composed of two ATP-binding proteins (SsuB), two transmembrane proteins (SsuC) and a solute-binding protein (SsuA).

It is found in the cell inner membrane. It carries out the reaction ATP + H2O + aliphatic sulfonate-[sulfonate-binding protein]Side 1 = ADP + phosphate + aliphatic sulfonateSide 2 + [sulfonate-binding protein]Side 1.. Its function is as follows. Part of the ABC transporter complex SsuABC involved in aliphatic sulfonates import. Responsible for energy coupling to the transport system. The protein is Aliphatic sulfonates import ATP-binding protein SsuB 2 of Pseudomonas syringae pv. syringae (strain B728a).